Here is a 438-residue protein sequence, read N- to C-terminus: ATP-dependent RNA helicase RhlB (438 aa).

The short motif at 9–37 is the Q motif element; sequence QRFADLPLHPEVKQALAENGFEFCTPIQA. The region spanning 40–219 is the Helicase ATP-binding domain; it reads LPVLLQSKDI…YDHMNEPVKV (180 aa). An ATP-binding site is contributed by 53–60; sequence AQTGTGKT. The DEAD box motif lies at 165–168; the sequence is DEAD. The 148-residue stretch at 243 to 390 folds into the Helicase C-terminal domain; it reads KMRLLLTLIE…VSNYDSEALL (148 aa). The segment at 395-438 is disordered; that stretch reads TPAKIHRKHPSGTRNLRDRSGTSRPGAQRSGARPPRHDRTRRHS. Basic residues predominate over residues 428–438; sequence PPRHDRTRRHS.

The protein belongs to the DEAD box helicase family. RhlB subfamily. As to quaternary structure, component of the RNA degradosome, which is a multiprotein complex involved in RNA processing and mRNA degradation.

The protein resides in the cytoplasm. It carries out the reaction ATP + H2O = ADP + phosphate + H(+). Functionally, DEAD-box RNA helicase involved in RNA degradation. Has RNA-dependent ATPase activity and unwinds double-stranded RNA. This chain is ATP-dependent RNA helicase RhlB, found in Shewanella baltica (strain OS223).